The sequence spans 335 residues: Protein-arginine kinase (335 aa).

The Phosphagen kinase C-terminal domain maps to 21 to 244; that stretch reads VIISSRIRLA…NQIINEEKQI (224 aa). ATP-binding positions include 24 to 28, H82, R115, 166 to 170, and 197 to 202; these read SSRIR, RASVM, and RGIYGE.

It belongs to the ATP:guanido phosphotransferase family.

The catalysed reaction is L-arginyl-[protein] + ATP = N(omega)-phospho-L-arginyl-[protein] + ADP + H(+). Catalyzes the specific phosphorylation of arginine residues in proteins. The protein is Protein-arginine kinase of Staphylococcus epidermidis (strain ATCC 12228 / FDA PCI 1200).